The primary structure comprises 230 residues: Urease accessory protein UreG (230 aa).

Residue 33 to 40 (GPVGSGKT) participates in GTP binding.

Belongs to the SIMIBI class G3E GTPase family. UreG subfamily. In terms of assembly, homodimer. UreD, UreF and UreG form a complex that acts as a GTP-hydrolysis-dependent molecular chaperone, activating the urease apoprotein by helping to assemble the nickel containing metallocenter of UreC. The UreE protein probably delivers the nickel.

It is found in the cytoplasm. Its function is as follows. Facilitates the functional incorporation of the urease nickel metallocenter. This process requires GTP hydrolysis, probably effectuated by UreG. This Mycobacteroides abscessus (strain ATCC 19977 / DSM 44196 / CCUG 20993 / CIP 104536 / JCM 13569 / NCTC 13031 / TMC 1543 / L948) (Mycobacterium abscessus) protein is Urease accessory protein UreG.